Consider the following 231-residue polypeptide: Uracil-DNA glycosylase (231 aa).

Residue D71 is the Proton acceptor of the active site.

Belongs to the uracil-DNA glycosylase (UDG) superfamily. UNG family.

The protein resides in the cytoplasm. It carries out the reaction Hydrolyzes single-stranded DNA or mismatched double-stranded DNA and polynucleotides, releasing free uracil.. In terms of biological role, excises uracil residues from the DNA which can arise as a result of misincorporation of dUMP residues by DNA polymerase or due to deamination of cytosine. In Pseudomonas aeruginosa (strain UCBPP-PA14), this protein is Uracil-DNA glycosylase.